The sequence spans 444 residues: ATP-dependent protease ATPase subunit HslU (444 aa).

Residues Ile-20 and 62–67 (GVGKTE) each bind ATP. The disordered stretch occupies residues 137-162 (LVPPSRGTSGEPERGEDSNARQTFRK). The ATP site is built by Asp-257, Glu-322, and Arg-394.

This sequence belongs to the ClpX chaperone family. HslU subfamily. A double ring-shaped homohexamer of HslV is capped on each side by a ring-shaped HslU homohexamer. The assembly of the HslU/HslV complex is dependent on binding of ATP.

It is found in the cytoplasm. In terms of biological role, ATPase subunit of a proteasome-like degradation complex; this subunit has chaperone activity. The binding of ATP and its subsequent hydrolysis by HslU are essential for unfolding of protein substrates subsequently hydrolyzed by HslV. HslU recognizes the N-terminal part of its protein substrates and unfolds these before they are guided to HslV for hydrolysis. The sequence is that of ATP-dependent protease ATPase subunit HslU from Bordetella petrii (strain ATCC BAA-461 / DSM 12804 / CCUG 43448).